Consider the following 443-residue polypeptide: Ribulose bisphosphate carboxylase large chain (443 aa).

Substrate-binding residues include N89 and T139. The active-site Proton acceptor is K141. K143 lines the substrate pocket. 3 residues coordinate Mg(2+): K167, D169, and E170. K167 is modified (N6-carboxylysine). Residue H260 is the Proton acceptor of the active site. Residues R261, H293, and S345 each coordinate substrate.

Belongs to the RuBisCO large chain family. Type I subfamily. Heterohexadecamer of 8 large chains and 8 small chains; disulfide-linked. The disulfide link is formed within the large subunit homodimers. The cofactor is Mg(2+). Post-translationally, the disulfide bond which can form in the large chain dimeric partners within the hexadecamer appears to be associated with oxidative stress and protein turnover.

The protein resides in the plastid. It localises to the chloroplast. The catalysed reaction is 2 (2R)-3-phosphoglycerate + 2 H(+) = D-ribulose 1,5-bisphosphate + CO2 + H2O. It carries out the reaction D-ribulose 1,5-bisphosphate + O2 = 2-phosphoglycolate + (2R)-3-phosphoglycerate + 2 H(+). RuBisCO catalyzes two reactions: the carboxylation of D-ribulose 1,5-bisphosphate, the primary event in carbon dioxide fixation, as well as the oxidative fragmentation of the pentose substrate in the photorespiration process. Both reactions occur simultaneously and in competition at the same active site. This Sesamum indicum (Oriental sesame) protein is Ribulose bisphosphate carboxylase large chain.